The following is an 80-amino-acid chain: Conotoxin MaIr193 (80 aa).

An N-terminal signal peptide occupies residues 1–22 (MKLTCMMIVAVLFLTAWTLVTA). Residues 23–51 (DGTRDGLKNRFPKARLEMKNSEAPRSRGR) constitute a propeptide that is removed on maturation. Intrachain disulfides connect Cys52–Cys69, Cys59–Cys73, and Cys68–Cys77. Position 64 is a 4-hydroxyproline (Pro64).

The protein belongs to the conotoxin O1 superfamily. In terms of tissue distribution, expressed by the venom duct.

The protein localises to the secreted. The protein is Conotoxin MaIr193 of Conus marmoreus (Marble cone).